Here is a 109-residue protein sequence, read N- to C-terminus: Phycoerythrin alpha-2 subunit (109 aa).

Residues Asp-52, Ser-53, Glu-63, Arg-64, Cys-67, Thr-72, Lys-74, Ala-75, and Lys-84 each contribute to the (2R,3E)-phycoerythrobilin site.

Belongs to the phycoerythrin family. As to quaternary structure, heterotetramer of 2 different alpha chains and 2 identical beta chains which form 2 alpha-beta heterodimers within the heterotetramer. The two alpha-beta heterodimers are rotated to an open configuration in contrast to the closed configuration found in other cryptophyte species due to the insertion of a single amino acid, Asp-65, in a conserved region of the alpha chain. In the open form, the central chromophores are not in physical contact but are separated by a water-filled channel. In terms of processing, contains three phycoerythrobilin chromophores with binding mediated by both the alpha and beta subunits.

It is found in the plastid. The protein resides in the chloroplast thylakoid membrane. In terms of biological role, light-harvesting photosynthetic tetrapyrrole chromophore-protein from the phycobiliprotein complex. The polypeptide is Phycoerythrin alpha-2 subunit (Hemiselmis andersenii (Cryptophyte alga)).